The chain runs to 388 residues: Leucine aminopeptidase 1 (388 aa).

The first 19 residues, 1–19 (MKSLSLLALAAIAPPAAVA), serve as a signal peptide directing secretion. A propeptide spanning residues 20–88 (AVVDHQVPFE…SVKSHERIQV (69 aa)) is cleaved from the precursor. N180 is a glycosylation site (N-linked (GlcNAc...) asparagine). Positions 188, 207, 246, and 273 each coordinate Zn(2+). The cysteines at positions 322 and 326 are disulfide-linked. H355 is a Zn(2+) binding site.

This sequence belongs to the peptidase M28 family. M28E subfamily. As to quaternary structure, monomer. It depends on Zn(2+) as a cofactor.

Its subcellular location is the secreted. Its function is as follows. Extracellular aminopeptidase that allows assimilation of proteinaceous substrates. In Coccidioides posadasii (strain RMSCC 757 / Silveira) (Valley fever fungus), this protein is Leucine aminopeptidase 1 (LAP1).